Here is a 229-residue protein sequence, read N- to C-terminus: Adenylate kinase (229 aa).

Positions 1–9 (MLSTLAKRF) are excised as a propeptide. 25–30 (GVGKGT) contributes to the ATP binding site. The segment at 45–74 (STGDALRAEIRGQTPLGKRVKGIIESGGLV) is NMP. Residues Thr46, Arg51, 72–74 (GLV), 100–103 (GIPR), and Gln107 contribute to the AMP site. The segment at 141–178 (GRLFHPGSGRVYHKVTNPPKKPMTDDITGEPLIIRKDD) is LID. Arg142 is an ATP binding site. Residues Arg175 and Arg186 each coordinate AMP. Gly214 is a binding site for ATP.

The protein belongs to the adenylate kinase family.

It localises to the hydrogenosome. It carries out the reaction AMP + ATP = 2 ADP. Functionally, catalyzes the reversible transfer of the terminal phosphate group between ATP and AMP. Plays an important role in cellular energy homeostasis and in adenine nucleotide metabolism. In Trichomonas vaginalis, this protein is Adenylate kinase.